The following is a 513-amino-acid chain: MEAIISFAGIGINYKKLQSKLQHNFGRLLKALTVTARALPGQPKHIAIRQETAFTLQGEYIYFPILLRKQFEMFNMVYTAHPVSLRALPCVETEFPLFNYQQEMVDKIHKKLLSPYGRFYLHLNTGLGKTRIAISIIQKLLYPTLVIVPTKAIQIQWIDELTLLLPHLRVAAYNNAACKKKDMTSKEYDVIVGIINTLRKKPEQFFEPFGLVVLDEAHELHSPENYKIFWKIQLSRILGLSATPLDRPDGMDKIIIHHLGQPQRTVSPTTTFSGYVREIEYQGHPDFVSPVCINEKVSAIATIDKLLQDPSRIQLVVNEAKRLYSLHTAEPHKWGTDEPYGIIIFVEFRKLLEIFYQALSKEFKDVQIIVPEVALLCGGVSNTALSQAHSASIILLTYGYGRRGISFKHMTSIIMATPRRNNMEQILGRITRQGSDEKKVRIVVDIKDTLSPLSSQVYDRHRIYKKKGYPIFKCSASYQQPYSSNEVLIWDPYNESCLACTTTPPSPSKQKHT.

Residues Lys110–Pro262 form the Helicase ATP-binding domain. Leu123–Thr130 lines the ATP pocket. The short motif at Asp215–His218 is the DEAH box element.

This sequence belongs to the DEAD box helicase family. DEAH subfamily.

It catalyses the reaction ATP + H2O = ADP + phosphate + H(+). The polypeptide is Putative ATP-dependent RNA helicase QP509L (Ornithodoros (relapsing fever ticks)).